A 467-amino-acid chain; its full sequence is Glutamate--tRNA ligase 1 (467 aa).

The 'HIGH' region motif lies at 8 to 18 (PSPTGHLHVGG). Positions 230–234 (PLSKR) match the 'KMSKS' region motif. K233 lines the ATP pocket.

The protein belongs to the class-I aminoacyl-tRNA synthetase family. Glutamate--tRNA ligase type 1 subfamily. Monomer.

It is found in the cytoplasm. It carries out the reaction tRNA(Glu) + L-glutamate + ATP = L-glutamyl-tRNA(Glu) + AMP + diphosphate. Its function is as follows. Catalyzes the attachment of glutamate to tRNA(Glu) in a two-step reaction: glutamate is first activated by ATP to form Glu-AMP and then transferred to the acceptor end of tRNA(Glu). The protein is Glutamate--tRNA ligase 1 of Petrotoga mobilis (strain DSM 10674 / SJ95).